We begin with the raw amino-acid sequence, 270 residues long: Neurotrophic factor BDNF precursor form (270 aa).

The signal sequence occupies residues 1 to 18 (MTILFVTMVISYFSCMRA). A propeptide spanning residues 19-151 (APMREIPGVQ…AANMSMRVRR (133 aa)) is cleaved from the precursor. An N-linked (GlcNAc...) asparagine glycan is attached at asparagine 144. Disulfide bonds link cysteine 164–cysteine 231, cysteine 209–cysteine 260, and cysteine 219–cysteine 262.

This sequence belongs to the NGF-beta family.

The protein resides in the secreted. Promotes the survival of neuronal populations that are all located either in the central nervous system or directly connected to it. The chain is Neurotrophic factor BDNF precursor form (bdnf) from Cyprinus carpio (Common carp).